The chain runs to 671 residues: Acetyl-coenzyme A synthetase 1 (671 aa).

CoA is bound by residues 210 to 213 and Thr-329; that span reads RGGK. ATP-binding positions include 405-407, 429-434, Asp-520, and Arg-535; these read GEP and DTYWQT. A CoA-binding site is contributed by Ser-543. Arg-546 contributes to the ATP binding site. Arg-605 contacts CoA.

Belongs to the ATP-dependent AMP-binding enzyme family.

The catalysed reaction is acetate + ATP + CoA = acetyl-CoA + AMP + diphosphate. The chain is Acetyl-coenzyme A synthetase 1 (ACS1) from Debaryomyces hansenii (strain ATCC 36239 / CBS 767 / BCRC 21394 / JCM 1990 / NBRC 0083 / IGC 2968) (Yeast).